A 190-amino-acid chain; its full sequence is GMP synthase [glutamine-hydrolyzing] subunit A (190 aa).

The Glutamine amidotransferase type-1 domain maps to 2 to 189 (TILVINNKGQ…YEICKKRCNN (188 aa)). Residue Cys-76 is the Nucleophile of the active site. Active-site residues include His-163 and Glu-165.

In terms of assembly, heterodimer composed of a glutamine amidotransferase subunit (A) and a GMP-binding subunit (B).

The catalysed reaction is XMP + L-glutamine + ATP + H2O = GMP + L-glutamate + AMP + diphosphate + 2 H(+). The protein operates within purine metabolism; GMP biosynthesis; GMP from XMP (L-Gln route): step 1/1. In terms of biological role, catalyzes the synthesis of GMP from XMP. This Methanobrevibacter smithii (strain ATCC 35061 / DSM 861 / OCM 144 / PS) protein is GMP synthase [glutamine-hydrolyzing] subunit A.